We begin with the raw amino-acid sequence, 333 residues long: Nucleoid-associated protein (333 aa).

It belongs to the YejK family.

It is found in the cytoplasm. It localises to the nucleoid. The protein is Nucleoid-associated protein of Metapseudomonas resinovorans (Pseudomonas resinovorans).